The primary structure comprises 500 residues: Putative beta-lactamase-like 1 (500 aa).

This sequence belongs to the beta-lactamase family.

This is Putative beta-lactamase-like 1 (LACTBL1) from Homo sapiens (Human).